Consider the following 267-residue polypeptide: Glucosamine-6-phosphate deaminase (267 aa).

D72 acts as the Proton acceptor; for enolization step in catalysis. The active-site For ring-opening step is D141. The Proton acceptor; for ring-opening step role is filled by H143. The For ring-opening step role is filled by E148.

It belongs to the glucosamine/galactosamine-6-phosphate isomerase family. NagB subfamily.

It carries out the reaction alpha-D-glucosamine 6-phosphate + H2O = beta-D-fructose 6-phosphate + NH4(+). The protein operates within amino-sugar metabolism; N-acetylneuraminate degradation; D-fructose 6-phosphate from N-acetylneuraminate: step 5/5. Its activity is regulated as follows. Allosterically activated by N-acetylglucosamine 6-phosphate (GlcNAc6P). Catalyzes the reversible isomerization-deamination of glucosamine 6-phosphate (GlcN6P) to form fructose 6-phosphate (Fru6P) and ammonium ion. This chain is Glucosamine-6-phosphate deaminase, found in Borrelia hermsii (strain HS1 / DAH).